A 101-amino-acid chain; its full sequence is Urease subunit beta (101 aa).

The protein belongs to the urease beta subunit family. As to quaternary structure, heterotrimer of UreA (gamma), UreB (beta) and UreC (alpha) subunits. Three heterotrimers associate to form the active enzyme.

The protein localises to the cytoplasm. It carries out the reaction urea + 2 H2O + H(+) = hydrogencarbonate + 2 NH4(+). The protein operates within nitrogen metabolism; urea degradation; CO(2) and NH(3) from urea (urease route): step 1/1. The protein is Urease subunit beta of Paraburkholderia phymatum (strain DSM 17167 / CIP 108236 / LMG 21445 / STM815) (Burkholderia phymatum).